Consider the following 404-residue polypeptide: Cysteine desulfurase IscS (404 aa).

Pyridoxal 5'-phosphate is bound by residues 75–76 (AT), N155, Q183, and 203–205 (SAH). N6-(pyridoxal phosphate)lysine is present on K206. T243 contributes to the pyridoxal 5'-phosphate binding site. Catalysis depends on C328, which acts as the Cysteine persulfide intermediate. C328 is a [2Fe-2S] cluster binding site.

This sequence belongs to the class-V pyridoxal-phosphate-dependent aminotransferase family. NifS/IscS subfamily. As to quaternary structure, homodimer. Forms a heterotetramer with IscU, interacts with other sulfur acceptors. Requires pyridoxal 5'-phosphate as cofactor.

The protein resides in the cytoplasm. The enzyme catalyses (sulfur carrier)-H + L-cysteine = (sulfur carrier)-SH + L-alanine. It functions in the pathway cofactor biosynthesis; iron-sulfur cluster biosynthesis. In terms of biological role, master enzyme that delivers sulfur to a number of partners involved in Fe-S cluster assembly, tRNA modification or cofactor biosynthesis. Catalyzes the removal of elemental sulfur atoms from cysteine to produce alanine. Functions as a sulfur delivery protein for Fe-S cluster synthesis onto IscU, an Fe-S scaffold assembly protein, as well as other S acceptor proteins. The protein is Cysteine desulfurase IscS of Buchnera aphidicola subsp. Baizongia pistaciae (strain Bp).